Here is a 608-residue protein sequence, read N- to C-terminus: Malonate--CoA ligase (608 aa).

It belongs to the ATP-dependent AMP-binding enzyme family. In terms of tissue distribution, expressed in flowers.

The protein resides in the cytoplasm. It localises to the nucleus. It catalyses the reaction malonate + ATP + CoA = malonyl-CoA + AMP + diphosphate. Malonate--CoA ligase that catalyzes the formation of malonyl-CoA directly from malonate and CoA. May be required for the detoxification of malonate. This Arabidopsis thaliana (Mouse-ear cress) protein is Malonate--CoA ligase (AAE13).